A 62-amino-acid polypeptide reads, in one-letter code: Conotoxin Sr5.6 (62 aa).

The N-terminal stretch at 1–22 (MRCLPVFVILLLLIASASSVDA) is a signal peptide. Residues 23–44 (QLKTKDDVPLTSVHDNAKGTQH) constitute a propeptide that is removed on maturation. Proline amide is present on Pro61.

This sequence belongs to the conotoxin T superfamily. Contains 2 disulfide bonds that can be either 'C1-C3, C2-C4' or 'C1-C4, C2-C3', since these disulfide connectivities have been observed for conotoxins with cysteine framework V (for examples, see AC P0DQQ7 and AC P81755). Expressed by the venom duct.

The protein localises to the secreted. The polypeptide is Conotoxin Sr5.6 (Conus spurius (Alphabet cone)).